Consider the following 181-residue polypeptide: Peptide deformylase (181 aa).

Fe cation contacts are provided by Cys99 and His141. Glu142 is a catalytic residue. Residue His145 coordinates Fe cation.

It belongs to the polypeptide deformylase family. Fe(2+) serves as cofactor.

It catalyses the reaction N-terminal N-formyl-L-methionyl-[peptide] + H2O = N-terminal L-methionyl-[peptide] + formate. Functionally, removes the formyl group from the N-terminal Met of newly synthesized proteins. Requires at least a dipeptide for an efficient rate of reaction. N-terminal L-methionine is a prerequisite for activity but the enzyme has broad specificity at other positions. The polypeptide is Peptide deformylase (Chlamydia muridarum (strain MoPn / Nigg)).